The chain runs to 73 residues: Putative membrane protein insertion efficiency factor (73 aa).

This sequence belongs to the UPF0161 family.

The protein localises to the cell inner membrane. Could be involved in insertion of integral membrane proteins into the membrane. This Neisseria gonorrhoeae (strain ATCC 700825 / FA 1090) protein is Putative membrane protein insertion efficiency factor.